The sequence spans 434 residues: Rubisco accumulation factor 1.1, chloroplastic (434 aa).

The N-terminal 51 residues, 1–51 (MLSLTATTLSSSIFTQSKTHGFFNTRPVYRKPFTTITSALIPASNRQAPPK), are a transit peptide targeting the chloroplast. Positions 65–254 (IPPKFRSLDT…KAKKAVLREL (190 aa)) are N-terminal alpha-helix. Residues 273–419 (VPVVRLRFGE…GMVVLVVRPP (147 aa)) are C-terminal beta sheet.

This sequence belongs to the RAF family. In terms of assembly, homodimer.

The protein resides in the plastid. It is found in the chloroplast. Its function is as follows. Required for assembly or stability of RuBisCO. Acts at a postchaperonin step to fold and/or assemble the large subunit (rbcL) into RuBisCO. RAF1 binds first to a rbcL dimer (rbcL(2)), leading to a rbcL(8)-RAF1(4) complex formation. In the next step, RBCS displaces RAF1, thus resulting in holoenzyme formation. The chain is Rubisco accumulation factor 1.1, chloroplastic from Arabidopsis thaliana (Mouse-ear cress).